Here is a 1349-residue protein sequence, read N- to C-terminus: Indole-3-acetaldehyde oxidase (1349 aa).

Residues 7–94 (AAVVLAVNGK…RCSVTTSEGI (88 aa)) enclose the 2Fe-2S ferredoxin-type domain. Residues cysteine 46, cysteine 51, and cysteine 54 each coordinate [2Fe-2S] cluster. One can recognise an FAD-binding PCMH-type domain in the interval 237–415 (VPVSDDGWYR…LSIFIPEWGS (179 aa)).

It belongs to the xanthine dehydrogenase family. In terms of assembly, aldehyde oxidases (AO) are homodimers and heterodimers of AO subunits. [2Fe-2S] cluster is required as a cofactor. The cofactor is FAD. Requires Mo-molybdopterin as cofactor. In terms of tissue distribution, mostly expressed in coleoptiles, and, to a lower extent, in mesocotyl and roots.

The protein localises to the cytoplasm. The catalysed reaction is indole-3-acetaldehyde + O2 + H2O = (indol-3-yl)acetate + H2O2 + H(+). In terms of biological role, in higher plants aldehyde oxidases (AO) appear to be homo- and heterodimeric assemblies of AO subunits with probably different physiological functions. Involved in the biosynthesis of auxin. This is Indole-3-acetaldehyde oxidase (AO2) from Zea mays (Maize).